Consider the following 211-residue polypeptide: Large ribosomal subunit protein uL4 (211 aa).

A disordered region spans residues 41 to 87; that stretch reads QAHARQGTASTLTRSEVRGGGRKPYKQKGTGRARQGSIRTPLRPGGG. Residues 60–71 are compositionally biased toward basic residues; that stretch reads GGRKPYKQKGTG.

The protein belongs to the universal ribosomal protein uL4 family. As to quaternary structure, part of the 50S ribosomal subunit.

Functionally, one of the primary rRNA binding proteins, this protein initially binds near the 5'-end of the 23S rRNA. It is important during the early stages of 50S assembly. It makes multiple contacts with different domains of the 23S rRNA in the assembled 50S subunit and ribosome. Its function is as follows. Forms part of the polypeptide exit tunnel. This Parasynechococcus marenigrum (strain WH8102) protein is Large ribosomal subunit protein uL4.